The sequence spans 203 residues: ATP-dependent Clp protease proteolytic subunit (203 aa).

The active-site Nucleophile is the S100. H125 is an active-site residue.

It belongs to the peptidase S14 family. Fourteen ClpP subunits assemble into 2 heptameric rings which stack back to back to give a disk-like structure with a central cavity, resembling the structure of eukaryotic proteasomes.

It is found in the cytoplasm. It catalyses the reaction Hydrolysis of proteins to small peptides in the presence of ATP and magnesium. alpha-casein is the usual test substrate. In the absence of ATP, only oligopeptides shorter than five residues are hydrolyzed (such as succinyl-Leu-Tyr-|-NHMec, and Leu-Tyr-Leu-|-Tyr-Trp, in which cleavage of the -Tyr-|-Leu- and -Tyr-|-Trp bonds also occurs).. Its function is as follows. Cleaves peptides in various proteins in a process that requires ATP hydrolysis. Has a chymotrypsin-like activity. Plays a major role in the degradation of misfolded proteins. The chain is ATP-dependent Clp protease proteolytic subunit from Anaeromyxobacter sp. (strain K).